Here is a 154-residue protein sequence, read N- to C-terminus: Aspartate carbamoyltransferase regulatory chain (154 aa).

4 residues coordinate Zn(2+): Cys-109, Cys-114, Cys-138, and Cys-141.

Belongs to the PyrI family. Contains catalytic and regulatory chains. Zn(2+) is required as a cofactor.

Involved in allosteric regulation of aspartate carbamoyltransferase. This chain is Aspartate carbamoyltransferase regulatory chain, found in Aliivibrio fischeri (strain ATCC 700601 / ES114) (Vibrio fischeri).